The following is a 791-amino-acid chain: FHF complex subunit HOOK-interacting protein 1B (791 aa).

Disordered regions lie at residues 465–510 and 524–556; these read APSP…VPRP and SLGG…SPAE. Position 467 is a phosphoserine (Ser-467). Low complexity predominate over residues 496–510; sequence SPSVDSSSVVTVPRP. Phosphoserine is present on residues Ser-524, Ser-537, Ser-543, Ser-547, and Ser-679. Residues 541-552 show a composition bias toward low complexity; it reads TASPTSSPGRRP. Thr-708 carries the phosphothreonine modification. Ser-716 carries the phosphoserine modification.

This sequence belongs to the FHIP family. In terms of assembly, component of the FTS/Hook/FHIP complex (FHF complex), composed of AKTIP/FTS, FHIP1B, and one or more members of the Hook family of proteins HOOK1, HOOK2, and HOOK3. The FHF complex associates with the homotypic vesicular sorting complex (the HOPS complex).

Component of the FTS/Hook/FHIP complex (FHF complex). The FHF complex may function to promote vesicle trafficking and/or fusion via the homotypic vesicular protein sorting complex (the HOPS complex). FHF complex promotes the distribution of AP-4 complex to the perinuclear area of the cell. This is FHF complex subunit HOOK-interacting protein 1B (Fhip1b) from Rattus norvegicus (Rat).